Consider the following 1052-residue polypeptide: Error-prone DNA polymerase (1052 aa).

It belongs to the DNA polymerase type-C family. DnaE2 subfamily.

It is found in the cytoplasm. The enzyme catalyses DNA(n) + a 2'-deoxyribonucleoside 5'-triphosphate = DNA(n+1) + diphosphate. DNA polymerase involved in damage-induced mutagenesis and translesion synthesis (TLS). It is not the major replicative DNA polymerase. The chain is Error-prone DNA polymerase from Bordetella parapertussis (strain 12822 / ATCC BAA-587 / NCTC 13253).